Reading from the N-terminus, the 1333-residue chain is Aldehyde oxidase 1 (1333 aa).

A 2Fe-2S ferredoxin-type domain is found at 4–91 (PQLLFYVNGQ…GTAVTTVEGI (88 aa)). Positions 43, 48, 51, and 73 each coordinate [2Fe-2S] cluster. Residue glutamine 112 coordinates Mo-molybdopterin. [2Fe-2S] cluster-binding residues include cysteine 113, cysteine 116, cysteine 148, and cysteine 150. Cysteine 150 lines the Mo-molybdopterin pocket. Residues 235 to 420 (FYSNRMTWIS…VSVNIPCSRK (186 aa)) form the FAD-binding PCMH-type domain. FAD contacts are provided by residues 263–270 (IVMGYTSV), alanine 344, serine 353, histidine 357, aspartate 366, and leucine 410. Mo-molybdopterin-binding positions include 801 to 802 (AF) and methionine 1042. Serine 1063 carries the phosphoserine modification. Mo-molybdopterin is bound by residues 1083–1086 (GSVV), glutamine 1198, and leucine 1263. The active-site Proton acceptor; for azaheterocycle hydroxylase activity is glutamate 1265.

The protein belongs to the xanthine dehydrogenase family. Homodimer. [2Fe-2S] cluster serves as cofactor. It depends on FAD as a cofactor. Requires Mo-molybdopterin as cofactor. Post-translationally, the N-terminus is blocked. Expression in liver (at protein level). Also detected in heart, lung, spleen and kidney.

The protein resides in the cytoplasm. It carries out the reaction an aldehyde + O2 + H2O = a carboxylate + H2O2 + H(+). The catalysed reaction is retinal + O2 + H2O = retinoate + H2O2 + H(+). With respect to regulation, inhibited by menadione and isovanillin. Not inhibited by allopurinol, a xanthine dehydrogenase potent inhibitor. Inhibited by the flavonoids quercetin, myricetin and genistein. Nitric oxide generation is inhibited by raloxifene and competitively inhibited by an increase in oxygen levels. Functionally, oxidase with broad substrate specificity, oxidizing aromatic azaheterocycles, such as N1-methylnicotinamide, N-methylphthalazinium and phthalazine, as well as aldehydes, such as benzaldehyde, retinal, pyridoxal, and vanillin. Plays a role in the metabolism of xenobiotics and drugs containing aromatic azaheterocyclic substituents. Participates in the bioactivation of prodrugs such as famciclovir, catalyzing the oxidation step from 6-deoxypenciclovir to penciclovir, which is a potent antiviral agent. Is probably involved in the regulation of reactive oxygen species homeostasis. Is a prominent source of superoxide generation via the one-electron reduction of molecular oxygen. Also catalyzes nitric oxide (NO) production; under anaerobic conditions, reduces nitrite to NO with NADH or aldehyde as electron donor, but under aerobic conditions, NADH is the preferred substrate. These reactions may be catalyzed by several isozymes. May play a role in adipogenesis. This chain is Aldehyde oxidase 1, found in Rattus norvegicus (Rat).